Here is an 810-residue protein sequence, read N- to C-terminus: Interleukin-4 receptor subunit alpha (810 aa).

The N-terminal stretch at 1 to 25 (MGRLCTKFLTSVGCLILLLVTGSGS) is a signal peptide. Residues 26 to 233 (IKVLGEPTCF…NHFQLPLIQR (208 aa)) are Extracellular-facing. Cysteines 34 and 44 form a disulfide. Asn-72 carries an N-linked (GlcNAc...) asparagine glycan. Cys-75 and Cys-87 are oxidised to a cystine. One can recognise a Fibronectin type-III domain in the interval 126-224 (APDNLTLHTN…EWSPSITWYN (99 aa)). Asn-129, Asn-135, and Asn-163 each carry an N-linked (GlcNAc...) asparagine glycan. Ser-165 is subject to Phosphoserine. Residues 213–217 (WSEWS) carry the WSXWS motif motif. Residues 234–257 (LPLGVTISCLCIPLFCLFCYFSIT) traverse the membrane as a helical segment. Residues 258–810 (KIKKIWWDQI…PVGALGIAVS (553 aa)) lie on the Cytoplasmic side of the membrane. A Box 1 motif motif is present at residues 263–271 (WWDQIPTPA). The required for IRS1 activation and IL4-induced cell growth stretch occupies residues 441–557 (GSGQASVSWA…ESWEQILHMS (117 aa)). Residues 460 to 482 (ATCQVTEQPSHPGPLSGSPAQSA) are disordered. A Phosphotyrosine modification is found at Tyr-500. The segment at 510 to 546 (APNPGELAPEQQQADHLEEEEPPSPADPHSSGPPMQP) is disordered. The segment at 557-653 (SVLQHGAAAG…SSVPLFTFGL (97 aa)) is required for IL4-induced gene expression. Phosphotyrosine occurs at positions 575, 603, and 631. The segment at 586 to 672 (AAQDPGVPGV…NSDPPKSPPE (87 aa)) is disordered. The segment covering 635 to 647 (QNPVPNQSPSSVP) has biased composition (low complexity). The ITIM motif signature appears at 707-712 (IVYSSL). A disordered region spans residues 766–810 (PPEANLMSAPKTPSNLSGEGKGPGHSPVPSQTTEVPVGALGIAVS).

This sequence belongs to the type I cytokine receptor family. Type 4 subfamily. As to quaternary structure, the functional IL4 receptor is formed by initial binding of IL4 to IL4R. Subsequent recruitment to the complex of the common gamma chain, in immune cells, creates a type I receptor and, in non-immune cells, of IL13RA1 forms a type II receptor. IL4R can also interact with the IL13/IL13RA1 complex to form a similar type II receptor. Interacts with the SH2-containing phosphatases, PTPN6/SHIP1, PTPN11/SHIP2 and INPP5D/SHIP. Interacts with JAK3. Interacts with PIK3C3. Interacts with JAK1 through a Box 1-containing region; inhibited by SOCS5. Interacts with SOCS5; inhibits IL4 signaling. Interacts with CLM1. Interacts with IL13RA2. On IL4 binding, phosphorylated on C-terminal tyrosine residues. In terms of processing, soluble IL4R can also be produced by proteolytic cleavage at the cell surface (shedding). In terms of tissue distribution, expressed in both Th1 and Th2 cells.

The protein resides in the cell membrane. It localises to the secreted. Its function is as follows. Receptor for both interleukin 4 and interleukin 13. Couples to the JAK1/2/3-STAT6 pathway. The IL4 response is involved in promoting Th2 differentiation. The IL4/IL13 responses are involved in regulating IgE production and, chemokine and mucus production at sites of allergic inflammation. In certain cell types, can signal through activation of insulin receptor substrates, IRS1/IRS2. In Mus musculus (Mouse), this protein is Interleukin-4 receptor subunit alpha (Il4r).